A 207-amino-acid polypeptide reads, in one-letter code: Putative 3-methyladenine DNA glycosylase (207 aa).

The protein belongs to the DNA glycosylase MPG family.

The chain is Putative 3-methyladenine DNA glycosylase from Listeria monocytogenes serotype 4b (strain CLIP80459).